A 301-amino-acid polypeptide reads, in one-letter code: Probable alpha-L-glutamate ligase (301 aa).

Residues 104–287 enclose the ATP-grasp domain; sequence LQLMSRKGLG…VASMIIKHIE (184 aa). ATP-binding positions include Lys-141, 178-179, Asp-187, and 211-213; these read EY and RSN. Positions 248, 260, and 262 each coordinate Mg(2+). Residues Asp-248, Glu-260, and Asn-262 each contribute to the Mn(2+) site.

The protein belongs to the RimK family. Mg(2+) is required as a cofactor. It depends on Mn(2+) as a cofactor.

This chain is Probable alpha-L-glutamate ligase, found in Marinomonas sp. (strain MWYL1).